A 954-amino-acid polypeptide reads, in one-letter code: Kinesin-like protein KIN-14A (954 aa).

Positions 24 to 142 constitute a Calponin-homology (CH) domain; that stretch reads ALRRHQAATW…CVISLKSYHE (119 aa). A coiled-coil region spans residues 242 to 293; that stretch reads LSRQLEKEQSSNSQVENRRRLLQAQESELLELKSMFQEVKIDFRTLKTQFQD. Residues 332 to 651 form the Kinesin motor domain; it reads NIRVFCRIRP…LKFAQRASCV (320 aa). Residue 413 to 420 participates in ATP binding; the sequence is GQTGSGKT. A coiled-coil region spans residues 656-692; that stretch reads AHANKESNEIRELKEQVENLKRALAAKELEKSSFKLK. Positions 697 to 709 are enriched in basic and acidic residues; sequence VRERAKQVPERTP. Disordered regions lie at residues 697 to 743, 824 to 858, and 882 to 954; these read VRER…TKLN, NLEV…RKSI, and PAKI…KRWL. 2 stretches are compositionally biased toward polar residues: residues 831–849 and 886–898; these read DEPS…NATK and ANST…SSIT.

This sequence belongs to the TRAFAC class myosin-kinesin ATPase superfamily. Kinesin family. KIN-14 subfamily.

This is Kinesin-like protein KIN-14A from Oryza sativa subsp. japonica (Rice).